Reading from the N-terminus, the 453-residue chain is DDB1- and CUL4-associated factor 12 (453 aa).

The segment covering 1-12 has biased composition (basic residues); that stretch reads MARKAVSRKRKA. Positions 1-34 are disordered; sequence MARKAVSRKRKASASPGAGSDAQGPQFGWDHSLH. The required for nuclear location and interaction with MOV10 stretch occupies residues 1-38; sequence MARKAVSRKRKASASPGAGSDAQGPQFGWDHSLHKRKR. S15 is subject to Phosphoserine. WD repeat units follow at residues 138–178, 182–220, 250–289, and 338–375; these read QQGC…PVCV, GHKD…LTKS, PDNC…SKLL, and ERGS…FLEE.

The protein belongs to the WD repeat DCAF12 family. Component of the DCX(DCAF12) E3 ubiquitin ligase complex, at least composed of CUL4 (CUL4A or CUL4B), DDB1, DCAF12 and RBX1.

It localises to the cytoplasm. The protein localises to the cytoskeleton. Its subcellular location is the microtubule organizing center. The protein resides in the centrosome. It is found in the nucleus. Its pathway is protein modification; protein ubiquitination. Functionally, substrate-recognition component of a DCX (DDB1-CUL4-X-box) E3 ubiquitin-protein ligase complex of the DesCEND (destruction via C-end degrons) pathway, which recognizes a C-degron located at the extreme C terminus of target proteins, leading to their ubiquitination and degradation. The C-degron recognized by the DesCEND pathway is usually a motif of less than ten residues and can be present in full-length proteins, truncated proteins or proteolytically cleaved forms. The DCX(DCAF12) complex specifically recognizes proteins with a diglutamate (Glu-Glu) at the C-terminus, such as MAGEA3, MAGEA6 and CCT5, leading to their ubiquitination and degradation. Ubiquitination of MAGEA3, MAGEA6 by DCX(DCAF12) complex is required for starvation-induced autophagy. Also directly recognizes the C-terminal glutamate-leucine (Glu-Leu) degron as an alternative degron in proteins such as MOV10, leading to their ubiquitination and degradation. Controls the protein level of MOV10 during spermatogenesis and in T cells, especially after their activation. The polypeptide is DDB1- and CUL4-associated factor 12 (Mus musculus (Mouse)).